Consider the following 270-residue polypeptide: Putative hydro-lyase Reut_A2449 (270 aa).

This sequence belongs to the D-glutamate cyclase family.

The chain is Putative hydro-lyase Reut_A2449 from Cupriavidus pinatubonensis (strain JMP 134 / LMG 1197) (Cupriavidus necator (strain JMP 134)).